The following is a 218-amino-acid chain: Octanoyltransferase (218 aa).

Residues 34–209 (ETSRDELWIV…TFSQELGYQH (176 aa)) enclose the BPL/LPL catalytic domain. Residues 73 to 80 (RGGQVTYH), 140 to 142 (SLG), and 153 to 155 (GLA) each bind substrate. Cysteine 171 (acyl-thioester intermediate) is an active-site residue.

It belongs to the LipB family.

It localises to the cytoplasm. The enzyme catalyses octanoyl-[ACP] + L-lysyl-[protein] = N(6)-octanoyl-L-lysyl-[protein] + holo-[ACP] + H(+). It participates in protein modification; protein lipoylation via endogenous pathway; protein N(6)-(lipoyl)lysine from octanoyl-[acyl-carrier-protein]: step 1/2. Functionally, catalyzes the transfer of endogenously produced octanoic acid from octanoyl-acyl-carrier-protein onto the lipoyl domains of lipoate-dependent enzymes. Lipoyl-ACP can also act as a substrate although octanoyl-ACP is likely to be the physiological substrate. The sequence is that of Octanoyltransferase from Shewanella loihica (strain ATCC BAA-1088 / PV-4).